A 418-amino-acid polypeptide reads, in one-letter code: D-amino acid dehydrogenase (418 aa).

3–17 is a binding site for FAD; it reads VLVLGAGVAGVSSAW.

Belongs to the DadA oxidoreductase family. Requires FAD as cofactor.

It carries out the reaction a D-alpha-amino acid + A + H2O = a 2-oxocarboxylate + AH2 + NH4(+). It participates in amino-acid degradation; D-alanine degradation; NH(3) and pyruvate from D-alanine: step 1/1. Its function is as follows. Oxidative deamination of D-amino acids. This is D-amino acid dehydrogenase from Neisseria meningitidis serogroup C (strain 053442).